A 143-amino-acid chain; its full sequence is ATP synthase subunit b' (143 aa).

Residues 6 to 26 (ATLPVMALQFILLAVILNAVF) form a helical membrane-spanning segment.

Belongs to the ATPase B chain family. F-type ATPases have 2 components, F(1) - the catalytic core - and F(0) - the membrane proton channel. F(1) has five subunits: alpha(3), beta(3), gamma(1), delta(1), epsilon(1). F(0) has four main subunits: a(1), b(1), b'(1) and c(10-14). The alpha and beta chains form an alternating ring which encloses part of the gamma chain. F(1) is attached to F(0) by a central stalk formed by the gamma and epsilon chains, while a peripheral stalk is formed by the delta, b and b' chains.

It localises to the cellular thylakoid membrane. In terms of biological role, f(1)F(0) ATP synthase produces ATP from ADP in the presence of a proton or sodium gradient. F-type ATPases consist of two structural domains, F(1) containing the extramembraneous catalytic core and F(0) containing the membrane proton channel, linked together by a central stalk and a peripheral stalk. During catalysis, ATP synthesis in the catalytic domain of F(1) is coupled via a rotary mechanism of the central stalk subunits to proton translocation. Its function is as follows. Component of the F(0) channel, it forms part of the peripheral stalk, linking F(1) to F(0). The b'-subunit is a diverged and duplicated form of b found in plants and photosynthetic bacteria. This is ATP synthase subunit b' from Microcystis aeruginosa (strain NIES-843 / IAM M-2473).